Reading from the N-terminus, the 309-residue chain is Beta-lactamase (309 aa).

A signal peptide spans 1–28 (MMILKNKRMLKIGICVGILGLSITSLEA). Catalysis depends on S92, which acts as the Acyl-ester intermediate. The Proton acceptor role is filled by E188. 254 to 256 (KSG) lines the substrate pocket.

This sequence belongs to the class-A beta-lactamase family.

The enzyme catalyses a beta-lactam + H2O = a substituted beta-amino acid. Functionally, this protein is a beta-lactamase with a substrate specificity for penicillins. This chain is Beta-lactamase (bla), found in Bacillus thuringiensis.